The following is a 249-amino-acid chain: Phosphoserine phosphatase (249 aa).

This sequence belongs to the HAD-like hydrolase superfamily. As to quaternary structure, homodimer. Mg(2+) is required as a cofactor. Co(2+) serves as cofactor.

It carries out the reaction O-phospho-L-serine + H2O = L-serine + phosphate. The enzyme catalyses O-phospho-D-serine + H2O = D-serine + phosphate. It functions in the pathway amino-acid biosynthesis; L-serine biosynthesis; L-serine from 3-phospho-D-glycerate: step 3/3. In terms of biological role, catalyzes the last step of the phosphorylated serine biosynthetic pathway, i.e. dephosphorylation of O-phospho-L-serine to form L-serine. Is also able to dephosphorylate O-phospho-D-serine with similar efficiency. Displays a poor activity on L-phosphothreonine, and cannot use L-phosphotyrosine, pyridoxal phosphate, glucose 6-phosphate, or fructose 6-phosphate as substrates. In Thermus thermophilus (strain ATCC BAA-163 / DSM 7039 / HB27), this protein is Phosphoserine phosphatase.